Consider the following 434-residue polypeptide: MKFSAYLTTLFIVLFSLFIQTVQAESEVRIVIDEGVDSARPIAIIPFKWNGSDSMPIDVADIISADLRNSGKFNPIAVSKMPQKPTSASEVISDVWSSLGIDAVVVGQVTPNEKGYSIAYQLVDTIGASGNSGEVLSQNQYAVPKNAIRLGAHTISDEVFEKLTAIRGAFRTKIAYVVQKNGGSKPYQVRIADYDGHNQFIVYSSSQPLMSPAWSPDGSKLAYVSFENRKSQLIVHDLQSGARRVIAAFPGHNGAPAFSPDGSKIAFASSKDGVLNIYVMNLGNGTISQLTSGAGNNTEPSWSPDGQSIIFTSDRAGGPQIYQMDVVGNGVSLVSAGRGYSGKISADGSILVMIYGDNIVKKDLATGVTEMLSSTFLDESPSISPNGIMIIYSSTQGLGKVLQLVSADGRFKARLPSSDGQIKFPAWSPYLNKN.

The N-terminal stretch at 1 to 24 (MKFSAYLTTLFIVLFSLFIQTVQA) is a signal peptide.

The protein belongs to the TolB family. As to quaternary structure, the Tol-Pal system is composed of five core proteins: the inner membrane proteins TolA, TolQ and TolR, the periplasmic protein TolB and the outer membrane protein Pal. They form a network linking the inner and outer membranes and the peptidoglycan layer.

The protein localises to the periplasm. In terms of biological role, part of the Tol-Pal system, which plays a role in outer membrane invagination during cell division and is important for maintaining outer membrane integrity. This chain is Tol-Pal system protein TolB, found in Histophilus somni (strain 2336) (Haemophilus somnus).